Here is a 127-residue protein sequence, read N- to C-terminus: Fumarate reductase subunit C (127 aa).

A run of 3 helical transmembrane segments spans residues 30–50 (ATVL…GSLV), 67–87 (LVIA…QTFF), and 107–127 (IIVL…LIVV).

It belongs to the FrdC family. In terms of assembly, part of an enzyme complex containing four subunits: a flavoprotein (FrdA), an iron-sulfur protein (FrdB), and two hydrophobic anchor proteins (FrdC and FrdD).

Its subcellular location is the cell inner membrane. Anchors the catalytic components of the fumarate reductase complex to the cell membrane, binds quinones. The chain is Fumarate reductase subunit C from Vibrio cholerae serotype O1 (strain ATCC 39541 / Classical Ogawa 395 / O395).